The sequence spans 268 residues: Virulence plasmid ParA family protein pGP5-D (268 aa).

13-20 (FKGGTGKT) provides a ligand contact to ATP.

The protein belongs to the ParA family.

The chain is Virulence plasmid ParA family protein pGP5-D from Chlamydia muridarum (strain MoPn / Nigg).